The following is a 1492-amino-acid chain: Neogenin (1492 aa).

Residues 1-36 (MAAEREAGRLLCTSSSRRCCPPPPLLLLLPLLLLLG) form the signal peptide. At 37-1136 (RPASGAAATK…PTSPLDSNML (1100 aa)) the chain is on the extracellular side. 4 consecutive Ig-like C2-type domains span residues 63–158 (PFYF…AKLT), 163–249 (PRFT…AELK), 254–347 (PEEI…AELT), and 352–437 (PGFL…AQLI). Asn-84 carries an N-linked (GlcNAc...) asparagine glycan. 3 disulfides stabilise this stretch: Cys-85–Cys-140, Cys-184–Cys-232, and Cys-281–Cys-331. N-linked (GlcNAc...) asparagine glycosylation occurs at Asn-221. Residue Asn-337 is glycosylated (N-linked (GlcNAc...) asparagine). A disulfide bond links Cys-373 and Cys-421. Fibronectin type-III domains follow at residues 472-566 (APRD…TQPE), 572-662 (PAPN…TLSD), 667-762 (APQN…TFES), 772-862 (VPSS…RPHT), 887-986 (PPVG…LVPT), and 988-1085 (PPKD…TPKA). Residues Asn-501 and Asn-520 are each glycosylated (N-linked (GlcNAc...) asparagine). Residues Asn-670 and Asn-746 are each glycosylated (N-linked (GlcNAc...) asparagine). N-linked (GlcNAc...) asparagine glycosylation is present at Asn-940. The segment at 1072 to 1128 (GPMSEAVQFRTPKADSSDKMPNDQALGSAGKGSRLPDLGSDYKPPMSGSNSPHGSPT) is disordered. The span at 1083–1092 (PKADSSDKMP) shows a compositional bias: basic and acidic residues. Residues 1118 to 1128 (SGSNSPHGSPT) are compositionally biased toward polar residues. Residues 1137–1157 (LVIIVSVGVITIVVVVVIAVF) traverse the membrane as a helical segment. Over 1158–1492 (CTRRTTSHQK…MKDLNAITTA (335 aa)) the chain is Cytoplasmic. 3 disordered regions span residues 1205–1237 (PIDKSPDPNPVMTDTPIPRNSQDITPVDNSMDS), 1266–1300 (PKMMMPFDSQPPQPVISAHPIHSLDNPHHHFHSSS), and 1321–1396 (SMSL…FAVP). 2 positions are modified to phosphoserine: Ser-1209 and Ser-1225. The span at 1222 to 1237 (PRNSQDITPVDNSMDS) shows a compositional bias: polar residues. A Phosphothreonine modification is found at Thr-1229. 2 stretches are compositionally biased toward polar residues: residues 1321-1353 (SMSLSDRANSTESVRNTPSTDTMPASSSQTCCT) and 1361-1380 (ATSSSYLASSQEEDSGQSLP). The residue at position 1432 (Ser-1432) is a Phosphoserine. Thr-1435 carries the phosphothreonine modification. Phosphoserine occurs at positions 1463, 1465, and 1466.

The protein belongs to the immunoglobulin superfamily. DCC family. Interacts with BMP2, BMP4, BMP6, and BMP7. Interacts with RGMA and RGMB. Interacts with MYO10. As to expression, widely expressed.

The protein resides in the cell membrane. In terms of biological role, multi-functional cell surface receptor regulating cell adhesion in many diverse developmental processes, including neural tube and mammary gland formation, myogenesis and angiogenesis. Receptor for members of the BMP, netrin, and repulsive guidance molecule (RGM) families. Netrin-Neogenin interactions result in a chemoattractive axon guidance response and cell-cell adhesion, the interaction between NEO1/Neogenin and RGMa and RGMb induces a chemorepulsive response. In Mus musculus (Mouse), this protein is Neogenin.